A 393-amino-acid chain; its full sequence is tRNA(Met) cytidine acetate ligase (393 aa).

The ATP site is built by glycine 81, asparagine 142, and arginine 167.

It belongs to the TmcAL family.

The protein resides in the cytoplasm. It carries out the reaction cytidine(34) in elongator tRNA(Met) + acetate + ATP = N(4)-acetylcytidine(34) in elongator tRNA(Met) + AMP + diphosphate. Catalyzes the formation of N(4)-acetylcytidine (ac(4)C) at the wobble position of elongator tRNA(Met), using acetate and ATP as substrates. First activates an acetate ion to form acetyladenylate (Ac-AMP) and then transfers the acetyl group to tRNA to form ac(4)C34. The polypeptide is tRNA(Met) cytidine acetate ligase (Bacillus cereus (strain AH187)).